The following is a 380-amino-acid chain: Asporin (380 aa).

An N-terminal signal peptide occupies residues 1–14 (MKEYVLLLFLALCS). Residues 15-32 (AKPFFSPSHIALKNMMLK) constitute a propeptide that is removed on maturation. Positions 35 to 54 (EDTDDDDDDDDDDDDDDEDN) are enriched in acidic residues. A disordered region spans residues 35–59 (EDTDDDDDDDDDDDDDDEDNSLFPT). Ser-55 carries O-linked (GalNAc...) serine glycosylation. Positions 66–102 (FFPFDLFPMCPFGCQCYSRVVHCSDLGLTSVPTNIPF) constitute an LRRNT domain. 2 disulfide bridges follow: Cys-75/Cys-81 and Cys-79/Cys-88. LRR repeat units lie at residues 103–124 (DTRM…DFKG), 127–148 (SLYG…AFLT), 151–173 (KLRR…PKSL), 174–193 (AELR…TFKG), 196–219 (ALHV…AFEG), 242–263 (TLLE…DFKR), 266–287 (ELQR…SLAN), 290–312 (RVRE…PELK), 313–334 (YLQI…DFCP), 335–357 (TVPK…VKYW), and 358–380 (EMQP…NFGM). The tract at residues 166-212 (PLNLPKSLAELRIHENKVKKIQKDTFKGMNALHVLEMSANPLDNNGI) is interaction with TGFB1. Asn-282 carries N-linked (GlcNAc...) asparagine glycosylation. Cys-333 and Cys-366 form a disulfide bridge.

The protein belongs to the small leucine-rich proteoglycan (SLRP) family. SLRP class I subfamily. In terms of assembly, interacts with TGFB1, TGFB2 and TGFB3. DCN, BGN, and FMOD inhibit binding to TGFB1. Interacts with BMP2. Interacts in vitro with type II collagen. Interacts with type I collagen. DCN can inhibit collagen binding. In terms of processing, there is no serine/glycine dipeptide sequence expected for the attachment of O-linked glycosaminoglycans and this is probably not a proteoglycan. The O-linked polysaccharide on 54-Ser is probably the mucin type linked to GalNAc. The N-linked glycan at Asn-282 is composed of variable structures of GlcNAc, mannose, fucose, HexNAc and hexose. Higher levels in osteoarthritic articular cartilage, aorta, uterus. Moderate expression in small intestine, heart, liver, bladder, ovary, stomach, and in the adrenal, thyroid, and mammary glands. Low expression in trachea, bone marrow, and lung. Colocalizes with TGFB1 in chondrocytes within osteoarthritic (OA) lesions of articular cartilage.

It is found in the secreted. The protein resides in the extracellular space. Its subcellular location is the extracellular matrix. Functionally, negatively regulates periodontal ligament (PDL) differentiation and mineralization to ensure that the PDL is not ossified and to maintain homeostasis of the tooth-supporting system. Inhibits BMP2-induced cytodifferentiation of PDL cells by preventing its binding to BMPR1B/BMP type-1B receptor, resulting in inhibition of BMP-dependent activation of SMAD proteins. Critical regulator of TGF-beta in articular cartilage and plays an essential role in cartilage homeostasis and osteoarthritis (OA) pathogenesis. Negatively regulates chondrogenesis in the articular cartilage by blocking the TGF-beta/receptor interaction on the cell surface and inhibiting the canonical TGF-beta/Smad signal. Binds calcium and plays a role in osteoblast-driven collagen biomineralization activity. This Homo sapiens (Human) protein is Asporin (ASPN).